Here is a 686-residue protein sequence, read N- to C-terminus: Tripartite terminase subunit 3 (686 aa).

The Walker A motif signature appears at 220–227 (IPRRHGKT). A Walker B motif motif is present at residues 315 to 320 (LLFVDE). The active-site For ATPase activity is the glutamate 320. Catalysis depends on for nuclease activity residues aspartate 474, glutamate 546, and aspartate 658.

Belongs to the herpesviridae TRM3 protein family. In terms of assembly, interacts with the terminase subunits TRM1 and TRM2. Interacts with portal protein.

Its subcellular location is the host nucleus. Its function is as follows. Component of the molecular motor that translocates viral genomic DNA in empty capsid during DNA packaging. Forms a tripartite terminase complex together with TRM1 and TRM2 in the host cytoplasm. Once the complex reaches the host nucleus, it interacts with the capsid portal vertex. This portal forms a ring in which genomic DNA is translocated into the capsid. TRM3 carries an RNase H-like nuclease activity that plays an important role for the cleavage of concatemeric viral DNA into unit length genomes. In Alcelaphine herpesvirus 1 (strain C500) (AlHV-1), this protein is Tripartite terminase subunit 3.